The chain runs to 237 residues: Protein ULTRAPETALA 1 (237 aa).

The SAND domain occupies 18–116 (EELQEMSGVN…SKTVLLKYYN (99 aa)). The CW-type zinc finger occupies 133–191 (VCHRDEFVGCNDCGKERRFRLRSRDECRLHHNAMGDPNWKCSDFPYDKITCEEEEERGS).

As to quaternary structure, interacts with HHO5. Associates with ATX1 for trimethylating 'Lys-4' on histone H3 (H3K4me3) at flower MADS box gene loci. Expressed at low levels in seedlings, roots, shoots, leaves, stems, inflorescences, pollen, flowers and siliques, with highest levels dividing tissues including inflorescence.

The protein localises to the cytoplasm. It localises to the nucleus. Functionally, putative transcription factor that acts as a key negative regulator of cell accumulation in shoot and floral meristems. Negatively regulates the size of the WUSCHEL (WUS)-expressing organizing center in inflorescence meristems. May act by down-regulating expression of WUS. Acts as an antirepressor that counteracts EMF1 action through modulation of trimethylated 'Lys-4' on histone H3 (H3K4me3) marks on target gene loci (including genes involved in salt stress response and flower development). Collaboratively with RBL and CYP40/SQN, influences floral meristem (FM) determinacy in an AGAMOUS and SUPERMAN-dependent manner, thus contributing to the floral developmental homeostasis. This chain is Protein ULTRAPETALA 1, found in Arabidopsis thaliana (Mouse-ear cress).